The primary structure comprises 469 residues: Glutamate--tRNA ligase (469 aa).

The 'HIGH' region signature appears at Pro11 to Asn21. The span at Gln114 to Pro131 shows a compositional bias: basic and acidic residues. The tract at residues Gln114–Pro139 is disordered. The 'KMSKS' region signature appears at Lys243 to Arg247. Lys246 contributes to the ATP binding site.

Belongs to the class-I aminoacyl-tRNA synthetase family. Glutamate--tRNA ligase type 1 subfamily. Monomer.

It localises to the cytoplasm. The catalysed reaction is tRNA(Glu) + L-glutamate + ATP = L-glutamyl-tRNA(Glu) + AMP + diphosphate. Catalyzes the attachment of glutamate to tRNA(Glu) in a two-step reaction: glutamate is first activated by ATP to form Glu-AMP and then transferred to the acceptor end of tRNA(Glu). The sequence is that of Glutamate--tRNA ligase from Paraburkholderia phytofirmans (strain DSM 17436 / LMG 22146 / PsJN) (Burkholderia phytofirmans).